Reading from the N-terminus, the 284-residue chain is Phospholipid phosphatase 1 (284 aa).

Topologically, residues 1–6 (MFDKTR) are cytoplasmic. The PDZ-binding; involved in localization to the apical cell membrane motif lies at 5-7 (TRL). Residues 7–27 (LPYVALDVLCVLLAGLPFAIL) traverse the membrane as a helical segment. Residues 28-53 (TSRHTPFQRGVFCNDESIKYPYKEDT) lie on the Extracellular side of the membrane. The helical transmembrane segment at 54 to 74 (IPYALLGGIIIPFSIIVIILG) threads the bilayer. At 75–94 (ETLSVYCNLLHSNSFIRNNY) the chain is on the cytoplasmic side. Residues 95–115 (IATIYKAIGTFLFGAAASQSL) traverse the membrane as a helical segment. Over 116–164 (TDIAKYSIGRLRPHFLDVCDPDWSKINCSDGYIEYYICRGNAERVKEGR) the chain is Extracellular. Residues 120–128 (KYSIGRLRP) form a phosphatase sequence motif I region. Asparagine 142 is a glycosylation site (N-linked (GlcNAc...) asparagine). A helical membrane pass occupies residues 165-185 (LSFYSGHSSFSMYCMLFVALY). The segment at 168–171 (YSGH) is phosphatase sequence motif II. The Proton donors role is filled by histidine 171. Over 186–199 (LQARMKGDWARLLR) the chain is Cytoplasmic. A helical membrane pass occupies residues 200 to 220 (PTLQFGLVAVSIYVGLSRVSD). The phosphatase sequence motif III stretch occupies residues 216-227 (SRVSDYKHHWSD). The Extracellular portion of the chain corresponds to 221-229 (YKHHWSDVL). The active-site Nucleophile is histidine 223. The chain crosses the membrane as a helical span at residues 230-250 (TGLIQGALVAILVAVYVSDFF). Residues 251–284 (KERTSFKERKEEDSHTTLHETPTTGNHYPSNHQP) are Cytoplasmic-facing. Residues 260–284 (KEEDSHTTLHETPTTGNHYPSNHQP) are disordered. Over residues 269-284 (HETPTTGNHYPSNHQP) the composition is skewed to polar residues.

It belongs to the PA-phosphatase related phosphoesterase family. In terms of assembly, forms functional homodimers and homooligomers that are not required for substrate recognition and catalytic activity. Can also form heterooligomers with PLPP2 and PLPP3. In terms of processing, N-glycosylated. N-linked sugars are of the complex type. N-glycosylation is not required for the phosphatase activity. Widely expressed with highest expression found in prostate. Found to be down-regulated in colon adenocarcinomas. In terms of tissue distribution, predominant in kidney, lung, placenta and liver. As to expression, predominant in heart and pancreas.

Its subcellular location is the cell membrane. The protein resides in the apical cell membrane. The protein localises to the membrane raft. It localises to the membrane. It is found in the caveola. The catalysed reaction is a 1,2-diacyl-sn-glycero-3-phosphate + H2O = a 1,2-diacyl-sn-glycerol + phosphate. It catalyses the reaction 1,2-dihexadecanoyl-sn-glycero-3-phosphate + H2O = 1,2-dihexadecanoyl-sn-glycerol + phosphate. The enzyme catalyses 1,2-di-(9Z-octadecenoyl)-sn-glycero-3-phosphate + H2O = 1,2-di-(9Z-octadecenoyl)-sn-glycerol + phosphate. It carries out the reaction a monoacyl-sn-glycero-3-phosphate + H2O = a monoacylglycerol + phosphate. The catalysed reaction is (9Z)-octadecenoyl-sn-glycero-3-phosphate + H2O = (9Z-octadecenoyl)-glycerol + phosphate. It catalyses the reaction a 1-acyl-sn-glycero-3-phosphate + H2O = a 1-acyl-sn-glycerol + phosphate. The enzyme catalyses 1-(9Z-octadecenoyl)-sn-glycero-3-phosphate + H2O = 1-(9Z-octadecenoyl)-sn-glycerol + phosphate. It carries out the reaction a 1,2-diacyl-sn-glycerol 3-diphosphate + H2O = a 1,2-diacyl-sn-glycero-3-phosphate + phosphate + H(+). The catalysed reaction is sphing-4-enine 1-phosphate + H2O = sphing-4-enine + phosphate. It catalyses the reaction an N-acylsphing-4-enine 1-phosphate + H2O = an N-acylsphing-4-enine + phosphate. The enzyme catalyses N-(octanoyl)-sphing-4-enine-1-phosphate + H2O = N-octanoylsphing-4-enine + phosphate. It carries out the reaction N-(9Z-octadecenoyl)-ethanolamine phosphate + H2O = N-(9Z-octadecenoyl) ethanolamine + phosphate. The catalysed reaction is 1-hexadecanoyl-2-(9Z-octadecenoyl)-sn-glycero-3-phosphate + H2O = 1-hexadecanoyl-2-(9Z-octadecenoyl)-sn-glycerol + phosphate. It participates in lipid metabolism; phospholipid metabolism. With respect to regulation, magnesium-independent phospholipid phosphatase. Insensitive to N-ethylmaleimide. Inhibited by sphingosine, zinc ions and modestly by propanolol. Inhibited by vanadate. Magnesium-independent phospholipid phosphatase of the plasma membrane that catalyzes the dephosphorylation of a variety of glycerolipid and sphingolipid phosphate esters including phosphatidate/PA, lysophosphatidate/LPA, diacylglycerol pyrophosphate/DGPP, sphingosine 1-phosphate/S1P and ceramide 1-phosphate/C1P. Also acts on N-oleoyl ethanolamine phosphate/N-(9Z-octadecenoyl)-ethanolamine phosphate, a potential physiological compound. Through its extracellular phosphatase activity allows both the hydrolysis and the cellular uptake of these bioactive lipid mediators from the milieu, regulating signal transduction in different cellular processes. It is for instance essential for the extracellular hydrolysis of S1P and subsequent conversion into intracellular S1P. Involved in the regulation of inflammation, platelets activation, cell proliferation and migration among other processes. May also have an intracellular activity to regulate phospholipid-mediated signaling pathways. This Homo sapiens (Human) protein is Phospholipid phosphatase 1.